Here is a 281-residue protein sequence, read N- to C-terminus: MALYCVGDIQGCDDAFERLLATIGFSPSRDTLYVLGDLVNRGPHSAAVLRRCITLGDSVRPLLGNHDLHLLAAAYGTRRPSRRDTLQDILLAPDRDEMLEWLRHQPLARRVHHGGGDLLMVHAGVLPQWTAEETLAYAGEVEAVLQSREFAGFLQQMYGNSPDLWSPELQGTDRLRVIVNALTRMRFCSPEGRMDFESTESASEAPPGLVPWFDAPGRRTLNTLIAFGHWSTLGWLDRADVLGLDTGCVWGGCLSAVRFGTTLADRERCHVECPQAQMPGA.

Belongs to the Ap4A hydrolase family.

It catalyses the reaction P(1),P(4)-bis(5'-adenosyl) tetraphosphate + H2O = 2 ADP + 2 H(+). Its function is as follows. Hydrolyzes diadenosine 5',5'''-P1,P4-tetraphosphate to yield ADP. This is Bis(5'-nucleosyl)-tetraphosphatase, symmetrical from Acidovorax ebreus (strain TPSY) (Diaphorobacter sp. (strain TPSY)).